A 61-amino-acid polypeptide reads, in one-letter code: Small ribosomal subunit protein uS14 (61 aa).

4 residues coordinate Zn(2+): Cys-24, Cys-27, Cys-40, and Cys-43.

Belongs to the universal ribosomal protein uS14 family. Zinc-binding uS14 subfamily. Part of the 30S ribosomal subunit. Contacts proteins S3 and S10. The cofactor is Zn(2+).

In terms of biological role, binds 16S rRNA, required for the assembly of 30S particles and may also be responsible for determining the conformation of the 16S rRNA at the A site. This Mesoplasma florum (strain ATCC 33453 / NBRC 100688 / NCTC 11704 / L1) (Acholeplasma florum) protein is Small ribosomal subunit protein uS14.